Consider the following 398-residue polypeptide: 1-deoxy-D-xylulose 5-phosphate reductoisomerase (398 aa).

6 residues coordinate NADPH: T10, G11, S12, I13, N38, and N124. K125 is a 1-deoxy-D-xylulose 5-phosphate binding site. Position 126 (E126) interacts with NADPH. D150 is a Mn(2+) binding site. Positions 151, 152, 186, and 209 each coordinate 1-deoxy-D-xylulose 5-phosphate. A Mn(2+)-binding site is contributed by E152. G215 contacts NADPH. 1-deoxy-D-xylulose 5-phosphate is bound by residues S222, N227, K228, and E231. A Mn(2+)-binding site is contributed by E231.

This sequence belongs to the DXR family. It depends on Mg(2+) as a cofactor. Mn(2+) serves as cofactor.

The enzyme catalyses 2-C-methyl-D-erythritol 4-phosphate + NADP(+) = 1-deoxy-D-xylulose 5-phosphate + NADPH + H(+). It participates in isoprenoid biosynthesis; isopentenyl diphosphate biosynthesis via DXP pathway; isopentenyl diphosphate from 1-deoxy-D-xylulose 5-phosphate: step 1/6. Functionally, catalyzes the NADPH-dependent rearrangement and reduction of 1-deoxy-D-xylulose-5-phosphate (DXP) to 2-C-methyl-D-erythritol 4-phosphate (MEP). The sequence is that of 1-deoxy-D-xylulose 5-phosphate reductoisomerase from Baumannia cicadellinicola subsp. Homalodisca coagulata.